The following is a 490-amino-acid chain: GTPase Der (490 aa).

2 consecutive EngA-type G domains span residues 3–166 and 203–376; these read PVVA…MEDL and IKLA…DSST. GTP contacts are provided by residues 9-16, 56-60, 118-121, 209-216, 256-260, and 321-324; these read GRPNVGKS, DTGGI, NKTD, DTAGV, and NKWD. The KH-like domain occupies 377 to 461; sequence RRVGTSMLTR…PIRIQFKEGE (85 aa).

The protein belongs to the TRAFAC class TrmE-Era-EngA-EngB-Septin-like GTPase superfamily. EngA (Der) GTPase family. Associates with the 50S ribosomal subunit.

GTPase that plays an essential role in the late steps of ribosome biogenesis. The polypeptide is GTPase Der (Escherichia coli O7:K1 (strain IAI39 / ExPEC)).